Reading from the N-terminus, the 296-residue chain is Glycine--tRNA ligase alpha subunit (296 aa).

The protein belongs to the class-II aminoacyl-tRNA synthetase family. In terms of assembly, tetramer of two alpha and two beta subunits.

It is found in the cytoplasm. The catalysed reaction is tRNA(Gly) + glycine + ATP = glycyl-tRNA(Gly) + AMP + diphosphate. This chain is Glycine--tRNA ligase alpha subunit, found in Desulfitobacterium hafniense (strain Y51).